The following is a 272-amino-acid chain: Indole-3-glycerol phosphate synthase (272 aa).

It belongs to the TrpC family.

It carries out the reaction 1-(2-carboxyphenylamino)-1-deoxy-D-ribulose 5-phosphate + H(+) = (1S,2R)-1-C-(indol-3-yl)glycerol 3-phosphate + CO2 + H2O. It participates in amino-acid biosynthesis; L-tryptophan biosynthesis; L-tryptophan from chorismate: step 4/5. The chain is Indole-3-glycerol phosphate synthase from Mycobacterium leprae (strain Br4923).